We begin with the raw amino-acid sequence, 323 residues long: tRNA U34 carboxymethyltransferase (323 aa).

Residues K91, W105, K110, G130, 152-154 (DPT), 181-182 (IE), M196, Y200, and R315 each bind carboxy-S-adenosyl-L-methionine.

This sequence belongs to the class I-like SAM-binding methyltransferase superfamily. CmoB family. As to quaternary structure, homotetramer.

It catalyses the reaction carboxy-S-adenosyl-L-methionine + 5-hydroxyuridine(34) in tRNA = 5-carboxymethoxyuridine(34) in tRNA + S-adenosyl-L-homocysteine + H(+). In terms of biological role, catalyzes carboxymethyl transfer from carboxy-S-adenosyl-L-methionine (Cx-SAM) to 5-hydroxyuridine (ho5U) to form 5-carboxymethoxyuridine (cmo5U) at position 34 in tRNAs. This is tRNA U34 carboxymethyltransferase from Escherichia coli O8 (strain IAI1).